The primary structure comprises 90 residues: Probable Fe(2+)-trafficking protein (90 aa).

Belongs to the Fe(2+)-trafficking protein family.

Functionally, could be a mediator in iron transactions between iron acquisition and iron-requiring processes, such as synthesis and/or repair of Fe-S clusters in biosynthetic enzymes. The polypeptide is Probable Fe(2+)-trafficking protein (Aliivibrio salmonicida (strain LFI1238) (Vibrio salmonicida (strain LFI1238))).